Consider the following 389-residue polypeptide: Probable dual-specificity RNA methyltransferase RlmN (389 aa).

The Proton acceptor role is filled by E114. In terms of domain architecture, Radical SAM core spans 120–358 (QHYGLSVCVT…CVVRQEHGTD (239 aa)). A disulfide bridge connects residues C127 and C363. [4Fe-4S] cluster-binding residues include C134, C138, and C141. S-adenosyl-L-methionine-binding positions include 186-187 (GE), S218, 241-243 (SLH), and N319. The active-site S-methylcysteine intermediate is the C363. Residues 370 to 389 (TMKRDRQKAVAEASGKSEGK) are disordered. The span at 371–389 (MKRDRQKAVAEASGKSEGK) shows a compositional bias: basic and acidic residues.

Belongs to the radical SAM superfamily. RlmN family. Requires [4Fe-4S] cluster as cofactor.

It is found in the cytoplasm. The catalysed reaction is adenosine(2503) in 23S rRNA + 2 reduced [2Fe-2S]-[ferredoxin] + 2 S-adenosyl-L-methionine = 2-methyladenosine(2503) in 23S rRNA + 5'-deoxyadenosine + L-methionine + 2 oxidized [2Fe-2S]-[ferredoxin] + S-adenosyl-L-homocysteine. It catalyses the reaction adenosine(37) in tRNA + 2 reduced [2Fe-2S]-[ferredoxin] + 2 S-adenosyl-L-methionine = 2-methyladenosine(37) in tRNA + 5'-deoxyadenosine + L-methionine + 2 oxidized [2Fe-2S]-[ferredoxin] + S-adenosyl-L-homocysteine. Its function is as follows. Specifically methylates position 2 of adenine 2503 in 23S rRNA and position 2 of adenine 37 in tRNAs. The protein is Probable dual-specificity RNA methyltransferase RlmN of Streptococcus thermophilus (strain CNRZ 1066).